The chain runs to 343 residues: MDSAFIIEKSVVIVAVFALTMLMAMYSTWAERKVAAFLQDRVGPNRAGWGGLLQPLADGLKLFSKEEFEPNTPNKFLFVVGPAIAMSTALMTSAVIPWGDKLHLFGRDILLQATDIDNALLYIFAVVSVGVYGIMIGGWASNNKFSLMGAVRAASQMVSYEVAMGLSMIALLMMTGTLSLKEISAQQSGMNWNVFYQPVSFLIFLICAFAETNRTPFDLAECESELIGGYHTEYSSMKMGFYLFAEYANMFISSAILAILFFGGYNYPGMQWMVENVGVNTANILGFLALFIKICGFIFFYMWVRWTIPRFRYDQLMHLGWRILIPLAILNIMVTGICLLLFK.

Helical transmembrane passes span 5-25 (FIIE…LMAM), 76-96 (FLFV…SAVI), 119-139 (ALLY…IGGW), 158-178 (VSYE…TGTL), 190-210 (MNWN…CAFA), 243-263 (LFAE…LFFG), 284-304 (ILGF…YMWV), and 323-343 (ILIP…LLFK).

This sequence belongs to the complex I subunit 1 family. In terms of assembly, NDH-1 is composed of 14 different subunits. Subunits NuoA, H, J, K, L, M, N constitute the membrane sector of the complex.

It localises to the cell inner membrane. The enzyme catalyses a quinone + NADH + 5 H(+)(in) = a quinol + NAD(+) + 4 H(+)(out). Its function is as follows. NDH-1 shuttles electrons from NADH, via FMN and iron-sulfur (Fe-S) centers, to quinones in the respiratory chain. The immediate electron acceptor for the enzyme in this species is believed to be ubiquinone. Couples the redox reaction to proton translocation (for every two electrons transferred, four hydrogen ions are translocated across the cytoplasmic membrane), and thus conserves the redox energy in a proton gradient. This subunit may bind ubiquinone. The protein is NADH-quinone oxidoreductase subunit H of Flavobacterium psychrophilum (strain ATCC 49511 / DSM 21280 / CIP 103535 / JIP02/86).